The primary structure comprises 440 residues: ATP-dependent protease ATPase subunit HslU (440 aa).

Residues Ile-18 and 60–65 (GVGKTE) contribute to the ATP site. The disordered stretch occupies residues 138-159 (RAQSFDQEDPSAGTRQKLRKKL). 3 residues coordinate ATP: Asp-252, Glu-318, and Arg-390.

Belongs to the ClpX chaperone family. HslU subfamily. A double ring-shaped homohexamer of HslV is capped on each side by a ring-shaped HslU homohexamer. The assembly of the HslU/HslV complex is dependent on binding of ATP.

The protein localises to the cytoplasm. In terms of biological role, ATPase subunit of a proteasome-like degradation complex; this subunit has chaperone activity. The binding of ATP and its subsequent hydrolysis by HslU are essential for unfolding of protein substrates subsequently hydrolyzed by HslV. HslU recognizes the N-terminal part of its protein substrates and unfolds these before they are guided to HslV for hydrolysis. The polypeptide is ATP-dependent protease ATPase subunit HslU (Alkalilimnicola ehrlichii (strain ATCC BAA-1101 / DSM 17681 / MLHE-1)).